We begin with the raw amino-acid sequence, 430 residues long: Enolase (430 aa).

Gln-164 is a (2R)-2-phosphoglycerate binding site. Residue Glu-208 is the Proton donor of the active site. Residues Asp-245, Glu-288, and Asp-315 each coordinate Mg(2+). (2R)-2-phosphoglycerate-binding residues include Lys-340, Arg-369, Ser-370, and Lys-391. Lys-340 serves as the catalytic Proton acceptor.

This sequence belongs to the enolase family. It depends on Mg(2+) as a cofactor.

It localises to the cytoplasm. Its subcellular location is the secreted. The protein localises to the cell surface. The enzyme catalyses (2R)-2-phosphoglycerate = phosphoenolpyruvate + H2O. The protein operates within carbohydrate degradation; glycolysis; pyruvate from D-glyceraldehyde 3-phosphate: step 4/5. Its function is as follows. Catalyzes the reversible conversion of 2-phosphoglycerate (2-PG) into phosphoenolpyruvate (PEP). It is essential for the degradation of carbohydrates via glycolysis. The chain is Enolase from Thermococcus onnurineus (strain NA1).